We begin with the raw amino-acid sequence, 170 residues long: Tachykinin-4 (170 aa).

The N-terminal stretch at 1 to 16 is a signal peptide; it reads MLPLLALFLLIGPAVS. A propeptide spanning residues 17-54 is cleaved from the precursor; the sequence is TTTRDREDLTFGAEAESWVTVNLKGIPVPSIELKLQEL. Position 66 is a methionine amide (methionine 66). Positions 67-170 are excised as a propeptide; that stretch reads GKRVEGVHPI…SQMMPRPSRP (104 aa). The disordered stretch occupies residues 107-170; it reads QETNHQSAGP…SQMMPRPSRP (64 aa). The span at 123 to 140 shows a compositional bias: polar residues; the sequence is SLQSQRGRSEPPNHQQHV.

It belongs to the tachykinin family.

The protein localises to the secreted. Functionally, tachykinins are active peptides which excite neurons, evoke behavioral responses, are potent vasodilators and secretagogues, and contract (directly or indirectly) many smooth muscles. Hemokinin induces plasma extravasation, mast cell degranulation, muscle contraction, salivary secretion and scratching behavior. Increases sperm motility. Induces potent analgesic effects and may play a role in pain modulation. Promotes survival of bone marrow B lineage cells and of cultured LPS-stimulated pre-B cells and may act as an autocrine factor required for B-cell survival and proliferation. Lowers systemic arterial pressure following intravenous injection. Induces interferon-gamma production and may play a role in the inflammatory response. Shows potent affinity and specificity for the NK-1 receptor. This chain is Tachykinin-4, found in Rattus norvegicus (Rat).